A 224-amino-acid polypeptide reads, in one-letter code: Ras-related protein Rab-32C (224 aa).

The tract at residues 1–22 (MYSNKNDKDKDKDQNNENNKNN) is disordered. 35 to 42 (GKLACGKT) serves as a coordination point for GTP. The Effector region motif lies at 57–65 (YKPTIGVDF). Residues 83–87 (DIAGQ) and 142–145 (NKCD) each bind GTP. The segment at 203 to 224 (GFKLSDQSQSTETTPTQSKTCC) is disordered. The span at 209-224 (QSQSTETTPTQSKTCC) shows a compositional bias: low complexity. S-geranylgeranyl cysteine attachment occurs at residues cysteine 223 and cysteine 224.

Belongs to the small GTPase superfamily. Rab family.

This is Ras-related protein Rab-32C (rab32C) from Dictyostelium discoideum (Social amoeba).